We begin with the raw amino-acid sequence, 34 residues long: AENRERVMVQGEEENTKELTGIEFENGFISCMQN.

As to expression, expressed by the venom gland.

It localises to the secreted. The protein is Peptide 9797 of Tityus stigmurus (Brazilian scorpion).